Consider the following 404-residue polypeptide: Argininosuccinate synthase (404 aa).

Residues 10 to 18 (AYSGGVDTS) and A38 each bind ATP. Y89 contributes to the L-citrulline binding site. Position 119 (G119) interacts with ATP. Residues T121, N125, and D126 each contribute to the L-aspartate site. N125 contacts L-citrulline. L-citrulline is bound by residues R129, S177, S186, E262, and Y274.

This sequence belongs to the argininosuccinate synthase family. Type 1 subfamily. In terms of assembly, homotetramer.

The protein localises to the cytoplasm. The catalysed reaction is L-citrulline + L-aspartate + ATP = 2-(N(omega)-L-arginino)succinate + AMP + diphosphate + H(+). Its pathway is amino-acid biosynthesis; L-arginine biosynthesis; L-arginine from L-ornithine and carbamoyl phosphate: step 2/3. This Prochlorococcus marinus (strain MIT 9515) protein is Argininosuccinate synthase.